We begin with the raw amino-acid sequence, 97 residues long: Class II hydrophobin 3 (97 aa).

The first 16 residues, 1 to 16 (MKFFAAAALFIAGVLA), serve as a signal peptide directing secretion. 4 disulfides stabilise this stretch: Cys-30/Cys-79, Cys-40/Cys-70, Cys-41/Cys-53, and Cys-80/Cys-91.

Belongs to the cerato-ulmin hydrophobin family. In terms of assembly, homodimer. Homodimers further self-assemble to form highly ordered films at water-air interfaces through intermolecular interactions.

Its subcellular location is the secreted. The protein localises to the cell wall. Functionally, aerial growth, conidiation, and dispersal of filamentous fungi in the environment rely upon a capability of their secreting small amphipathic proteins called hydrophobins (HPBs) with low sequence identity. Class I can self-assemble into an outermost layer of rodlet bundles on aerial cell surfaces, conferring cellular hydrophobicity that supports fungal growth, development and dispersal; whereas Class II form highly ordered films at water-air interfaces through intermolecular interactions but contribute nothing to the rodlet structure. This Trichoderma asperellum (strain ATCC 204424 / CBS 433.97 / NBRC 101777) protein is Class II hydrophobin 3.